The sequence spans 232 residues: Small ribosomal subunit protein uS3 (232 aa).

The region spanning 39–107 (IRAFLKKKLY…EVNVNIKEER (69 aa)) is the KH type-2 domain. Positions 212–232 (VQPEKTEDDAPKKTRRPRRGK) are disordered. Residues 213–223 (QPEKTEDDAPK) are compositionally biased toward basic and acidic residues.

The protein belongs to the universal ribosomal protein uS3 family. In terms of assembly, part of the 30S ribosomal subunit. Forms a tight complex with proteins S10 and S14.

In terms of biological role, binds the lower part of the 30S subunit head. Binds mRNA in the 70S ribosome, positioning it for translation. In Campylobacter curvus (strain 525.92), this protein is Small ribosomal subunit protein uS3.